Consider the following 394-residue polypeptide: Flavohemoprotein (394 aa).

Residues 1-136 enclose the Globin domain; sequence MLSENTINIV…LANVFIQREE (136 aa). Histidine 85 contributes to the heme b binding site. Residues tyrosine 95 and glutamate 135 each act as charge relay system in the active site. A reductase region spans residues 147-394; that stretch reads GGWRGLREFE…YECFGPHKVV (248 aa). Residues 150–255 form the FAD-binding FR-type domain; sequence RGLREFELVE…AAPAGDFFLD (106 aa). FAD contacts are provided by residues tyrosine 188 and 204–207; that span reads RQYS. 268–273 provides a ligand contact to NADP(+); that stretch reads GVGLTP. Position 387-390 (387-390) interacts with FAD; it reads CFGP.

It belongs to the globin family. Two-domain flavohemoproteins subfamily. The protein in the C-terminal section; belongs to the flavoprotein pyridine nucleotide cytochrome reductase family. Heme b is required as a cofactor. FAD serves as cofactor.

The catalysed reaction is 2 nitric oxide + NADPH + 2 O2 = 2 nitrate + NADP(+) + H(+). It catalyses the reaction 2 nitric oxide + NADH + 2 O2 = 2 nitrate + NAD(+) + H(+). Is involved in NO detoxification in an aerobic process, termed nitric oxide dioxygenase (NOD) reaction that utilizes O(2) and NAD(P)H to convert NO to nitrate, which protects the bacterium from various noxious nitrogen compounds. Therefore, plays a central role in the inducible response to nitrosative stress. The polypeptide is Flavohemoprotein (Vibrio vulnificus (strain YJ016)).